Reading from the N-terminus, the 259-residue chain is Ribonuclease HII (259 aa).

Residues 70 to 258 (TLIAGIDEVG…VKSLVLGKKE (189 aa)) form the RNase H type-2 domain. Positions 76, 77, and 168 each coordinate a divalent metal cation.

The protein belongs to the RNase HII family. It depends on Mn(2+) as a cofactor. Requires Mg(2+) as cofactor.

It localises to the cytoplasm. It carries out the reaction Endonucleolytic cleavage to 5'-phosphomonoester.. Functionally, endonuclease that specifically degrades the RNA of RNA-DNA hybrids. The protein is Ribonuclease HII of Streptococcus pneumoniae serotype 19F (strain G54).